The primary structure comprises 133 residues: Small ribosomal subunit protein eS17 (133 aa).

This sequence belongs to the eukaryotic ribosomal protein eS17 family.

The sequence is that of Small ribosomal subunit protein eS17 (RpS17) from Spodoptera frugiperda (Fall armyworm).